The primary structure comprises 997 residues: Kinesin-like protein KIF19 (997 aa).

The Kinesin motor domain maps to 11-346; the sequence is QLMVALRVRP…LTYAGRAKNI (336 aa). 104 to 111 serves as a coordination point for ATP; that stretch reads GPTGCGKT. Residues 361–388 are a coiled coil; it reads IAQYTSIIADLRGEIQRLKCKIDQQAGR. Basic and acidic residues predominate over residues 477 to 494; the sequence is EERRKESYTKEDSEKDSD. 4 disordered regions span residues 477–509, 665–704, 718–759, and 784–997; these read EERR…EVAS, KITP…GTDS, QVKS…SSEN, and AAQR…LQHN. A coiled-coil region spans residues 506-551; the sequence is EVASARENIAALVGEQKKLRKEKLALEQRCRELRARGRRLEETLPR. Residues 683–697 show a composition bias toward polar residues; that stretch reads KTLSSEAQRPQNNTL. Positions 750–759 are enriched in low complexity; that stretch reads INSSPESSEN. Polar residues-rich tracts occupy residues 835 to 851 and 950 to 959; these read TLQH…STGE and PNQNTGSGNP.

The protein belongs to the TRAFAC class myosin-kinesin ATPase superfamily. Kinesin family. Strongly expressed in the oviduct and trachea. Expressed in testis, lung, ovary and brain.

The protein resides in the cytoplasm. Its subcellular location is the cytoskeleton. It is found in the cell projection. The protein localises to the cilium. Its function is as follows. Plus end-directed microtubule-dependent motor protein that regulates the length of motile cilia by mediating depolymerization of microtubules at ciliary tips. The chain is Kinesin-like protein KIF19 (Kif19) from Mus musculus (Mouse).